We begin with the raw amino-acid sequence, 35 residues long: Photosystem II reaction center protein T (35 aa).

The chain crosses the membrane as a helical span at residues 3-23; that stretch reads ALVYTFLLVSTLGIIFFAIFF.

The protein belongs to the PsbT family. PSII is composed of 1 copy each of membrane proteins PsbA, PsbB, PsbC, PsbD, PsbE, PsbF, PsbH, PsbI, PsbJ, PsbK, PsbL, PsbM, PsbT, PsbY, PsbZ, Psb30/Ycf12, at least 3 peripheral proteins of the oxygen-evolving complex and a large number of cofactors. It forms dimeric complexes.

It is found in the plastid. Its subcellular location is the chloroplast thylakoid membrane. Functionally, found at the monomer-monomer interface of the photosystem II (PS II) dimer, plays a role in assembly and dimerization of PSII. PSII is a light-driven water plastoquinone oxidoreductase, using light energy to abstract electrons from H(2)O, generating a proton gradient subsequently used for ATP formation. The chain is Photosystem II reaction center protein T from Schisandra chinensis (Chinese magnolia vine).